The primary structure comprises 150 residues: MKVIFLQDVKGKGKKGEVKEVPTGYAQNFLLKKNLAKEATTQAIGELKGKQKSEEKAQAEILAQAQELKTQLESETTRVQFIEKVGPDGRTFGSITAKKIAEELQKQYGIKIDKRHIDLDHTIRAIGKVEVPVKLHKQVSSQIKLDIKEA.

Belongs to the bacterial ribosomal protein bL9 family.

In terms of biological role, binds to the 23S rRNA. This chain is Large ribosomal subunit protein bL9, found in Streptococcus agalactiae serotype Ia (strain ATCC 27591 / A909 / CDC SS700).